Reading from the N-terminus, the 204-residue chain is Peptide deformylase (204 aa).

Fe cation-binding residues include C131 and H174. The active site involves E175. H178 lines the Fe cation pocket.

The protein belongs to the polypeptide deformylase family. Requires Fe(2+) as cofactor.

The catalysed reaction is N-terminal N-formyl-L-methionyl-[peptide] + H2O = N-terminal L-methionyl-[peptide] + formate. Removes the formyl group from the N-terminal Met of newly synthesized proteins. Requires at least a dipeptide for an efficient rate of reaction. N-terminal L-methionine is a prerequisite for activity but the enzyme has broad specificity at other positions. This chain is Peptide deformylase, found in Streptococcus pyogenes serotype M1.